The sequence spans 366 residues: MSAARQAIASARSVVVKIGSSALTSLEGGLDTTRLDRLADAVEARMRAGSDVVVVSSGAIGAGLAPLGLSRRPRDLATKQAAASVGQLALAHAWGTSFARYGRTVGQVLLSADDFSRREHHRNAQRTLDRLRSLGAVAVVNENDTVATEEIRFGDNDRLAALVAHLVGADALILLSDVEGLYDGDPRKGAATFIPEVRSSADLDGVIAGSGGVLGTGGMASKLSAARLAADAGVPVLLAAAEQAATALGSGTVGTAFAARPVRLSARKFWVRHAADSRGALVLDDGAVQAVAQRRRSLLAAGITAVRGRFHGGDVVDLLAADQRLVARGVVEYDSTELSTMLGRSTTELPDTMQRPVIHADDLVKV.

Position 17 (Lys-17) interacts with ATP. Ser-57, Asp-144, and Asn-156 together coordinate substrate. ATP is bound by residues 176–177 (SD) and 216–222 (TGGMASK). In terms of domain architecture, PUA spans 278–352 (RGALVLDDGA…GRSTTELPDT (75 aa)).

The protein belongs to the glutamate 5-kinase family.

Its subcellular location is the cytoplasm. The catalysed reaction is L-glutamate + ATP = L-glutamyl 5-phosphate + ADP. The protein operates within amino-acid biosynthesis; L-proline biosynthesis; L-glutamate 5-semialdehyde from L-glutamate: step 1/2. In terms of biological role, catalyzes the transfer of a phosphate group to glutamate to form L-glutamate 5-phosphate. The chain is Glutamate 5-kinase from Nocardia farcinica (strain IFM 10152).